Reading from the N-terminus, the 433-residue chain is Tol-Pal system protein TolB (433 aa).

Positions 1–21 (MIKRLRGLLVMLCCVAGMAVA) are cleaved as a signal peptide.

Belongs to the TolB family. As to quaternary structure, the Tol-Pal system is composed of five core proteins: the inner membrane proteins TolA, TolQ and TolR, the periplasmic protein TolB and the outer membrane protein Pal. They form a network linking the inner and outer membranes and the peptidoglycan layer.

It localises to the periplasm. Part of the Tol-Pal system, which plays a role in outer membrane invagination during cell division and is important for maintaining outer membrane integrity. The protein is Tol-Pal system protein TolB of Pseudomonas putida (strain ATCC 47054 / DSM 6125 / CFBP 8728 / NCIMB 11950 / KT2440).